A 652-amino-acid polypeptide reads, in one-letter code: DNA mismatch repair protein MutL (652 aa).

2 disordered regions span residues 357 to 377 (LGANDRQGSHSSNTPTLNYPS) and 425 to 457 (PDKGSSAQVQNTSGSDQASAQKHETTTLQNSTD). The span at 365 to 375 (SHSSNTPTLNY) shows a compositional bias: polar residues.

It belongs to the DNA mismatch repair MutL/HexB family.

In terms of biological role, this protein is involved in the repair of mismatches in DNA. It is required for dam-dependent methyl-directed DNA mismatch repair. May act as a 'molecular matchmaker', a protein that promotes the formation of a stable complex between two or more DNA-binding proteins in an ATP-dependent manner without itself being part of a final effector complex. The polypeptide is DNA mismatch repair protein MutL (Colwellia psychrerythraea (strain 34H / ATCC BAA-681) (Vibrio psychroerythus)).